The primary structure comprises 107 residues: Large ribosomal subunit protein uL24 (107 aa).

Belongs to the universal ribosomal protein uL24 family. Part of the 50S ribosomal subunit.

One of two assembly initiator proteins, it binds directly to the 5'-end of the 23S rRNA, where it nucleates assembly of the 50S subunit. Its function is as follows. One of the proteins that surrounds the polypeptide exit tunnel on the outside of the subunit. The sequence is that of Large ribosomal subunit protein uL24 from Caldanaerobacter subterraneus subsp. tengcongensis (strain DSM 15242 / JCM 11007 / NBRC 100824 / MB4) (Thermoanaerobacter tengcongensis).